The primary structure comprises 363 residues: MDIENNLQDLKKKFSDVERNLENPTNLSQKEFVSFSKEYSELRPIIEIIDEYNILKEEISDLEEIMKDENSDGDIKELAKEELLEKQKIVLPKVKAKLKLALLPKDEDDSRNAILEIRAGTGGEEAALFAAMLFRMYQKYAERRNWKFEPISISNTGIGGYKEASALINGTEVFARLKFESGVHRVQRVPETESSGRLHTSAATVAILPEVEEVDFEIEEKDLRIDVYRSSGPGGQSVNTTDSAVRVTHLPTGIVVIQQDEKSQHKNKAKALKVLRARLYEIERQKKEMERSTMRKSQIGSGDRSERIRTYNFPQSRITDHRINLTSHRLEQIIKEGELDEFIEALISRNEAERLTGGGNVTF.

Residue Gln236 is modified to N5-methylglutamine. The interval 286–305 (KKEMERSTMRKSQIGSGDRS) is disordered.

Belongs to the prokaryotic/mitochondrial release factor family. Methylated by PrmC. Methylation increases the termination efficiency of RF1.

It is found in the cytoplasm. In terms of biological role, peptide chain release factor 1 directs the termination of translation in response to the peptide chain termination codons UAG and UAA. The sequence is that of Peptide chain release factor 1 from Wolbachia pipientis subsp. Culex pipiens (strain wPip).